We begin with the raw amino-acid sequence, 209 residues long: Cyclin-dependent kinase inhibitor 2 (209 aa).

Positions 1-32 (MAAVRRRERDVVEENGVTTTTVKRRKMEEEVD) are required for nuclear localization.

The protein belongs to the CDI family. ICK/KRP subfamily. In terms of assembly, specifically interacts with CDKA-1, but not with CDKB1-1. In terms of processing, phosphorylated.

Its subcellular location is the nucleus. It is found in the nucleoplasm. In terms of biological role, binds and inhibits CYCD2-1/CDKA-1 complex kinase activity. Regulates cell division which is crucial for plant growth, development and morphogenesis. May regulate early lateral root initiation by blocking the G1/S phase transition. Controls the mitosis-to-endocycle transition and the onset of the endoreduplication cycle during leaf development through inhibition of mitotic CDKA-1 kinase complexes. Specifically targets CDKA-1. The polypeptide is Cyclin-dependent kinase inhibitor 2 (KRP2) (Arabidopsis thaliana (Mouse-ear cress)).